The chain runs to 48 residues: Ambineela (48 aa).

Monomer. In terms of processing, the blue color is due to an unidentified non-fluorescent cofactor, covalently bound to it.

Functionally, ambineela is a blue protein and has a pI of 8.7. In Acidianus ambivalens (Desulfurolobus ambivalens), this protein is Ambineela.